The sequence spans 362 residues: Probable S-adenosylmethionine-dependent methyltransferase At5g37990 (362 aa).

Residues tyrosine 19, cysteine 66, asparagine 71, aspartate 107, serine 136, and phenylalanine 137 each contribute to the S-adenosyl-L-homocysteine site. The Mg(2+) site is built by asparagine 175, glutamate 261, and phenylalanine 263.

Belongs to the methyltransferase superfamily. Type-7 methyltransferase family. In terms of assembly, homodimer. Mg(2+) serves as cofactor.

The sequence is that of Probable S-adenosylmethionine-dependent methyltransferase At5g37990 from Arabidopsis thaliana (Mouse-ear cress).